The chain runs to 401 residues: Formate-dependent phosphoribosylglycinamide formyltransferase (401 aa).

Residues 22 to 23 (EL) and E82 contribute to the N(1)-(5-phospho-beta-D-ribosyl)glycinamide site. Residues R115, K157, 162–167 (SSGKGQ), 197–200 (EGFI), and E205 each bind ATP. The ATP-grasp domain occupies 120 to 315 (RLAAETLGLP…EFELHARAIL (196 aa)). Mg(2+) is bound by residues E274 and E286. Residues D293, K362, and 369-370 (RR) contribute to the N(1)-(5-phospho-beta-D-ribosyl)glycinamide site.

The protein belongs to the PurK/PurT family. As to quaternary structure, homodimer.

It catalyses the reaction N(1)-(5-phospho-beta-D-ribosyl)glycinamide + formate + ATP = N(2)-formyl-N(1)-(5-phospho-beta-D-ribosyl)glycinamide + ADP + phosphate + H(+). It participates in purine metabolism; IMP biosynthesis via de novo pathway; N(2)-formyl-N(1)-(5-phospho-D-ribosyl)glycinamide from N(1)-(5-phospho-D-ribosyl)glycinamide (formate route): step 1/1. Its function is as follows. Involved in the de novo purine biosynthesis. Catalyzes the transfer of formate to 5-phospho-ribosyl-glycinamide (GAR), producing 5-phospho-ribosyl-N-formylglycinamide (FGAR). Formate is provided by PurU via hydrolysis of 10-formyl-tetrahydrofolate. This chain is Formate-dependent phosphoribosylglycinamide formyltransferase, found in Cupriavidus pinatubonensis (strain JMP 134 / LMG 1197) (Cupriavidus necator (strain JMP 134)).